Reading from the N-terminus, the 647-residue chain is C2H2 finger domain transcription factor USV101 (647 aa).

Residues 1–10 (MSFVAPDDRA) are compositionally biased toward basic and acidic residues. Residues 1 to 132 (MSFVAPDDRA…ATGYTPDGQP (132 aa)) form a disordered region. Polar residues-rich tracts occupy residues 27–54 (ESTS…SPNQ) and 66–84 (SSHS…STAY). Residues 97–122 (PTQQQQQQQSEQHIPSPPSSSNRPPS) are compositionally biased toward low complexity. 2 consecutive C2H2-type zinc fingers follow at residues 144-169 (FRCR…VRKH) and 175-197 (FPCH…ATVH). The tract at residues 220-647 (QRASREQRRR…VKQQDDKKTQ (428 aa)) is disordered. Basic and acidic residues predominate over residues 222 to 248 (ASREQRRRGEVVEVPKGAVERRRETRK). A compositionally biased stretch (low complexity) spans 249 to 259 (AQAAAAQAAAA). Residues 261–278 (GHSQQNSPYAQYHESQWN) show a composition bias toward polar residues. Composition is skewed to low complexity over residues 312-327 (SSSA…YDSA), 404-414 (HGAYPPHDAAA), and 421-434 (GYYH…GSYP). Over residues 504 to 515 (RAEDDFGKDDRK) the composition is skewed to basic and acidic residues. Residues 521–540 (SPSNSQVPDSSTAAHANGAH) are compositionally biased toward low complexity. The segment covering 628–647 (VDKEREKKEEVKQQDDKKTQ) has biased composition (basic and acidic residues).

The protein localises to the nucleus. It is found in the cytoplasm. Its function is as follows. Transcription factor that promotes pheromone gene expression, which results in a subsequent increase in cell fusion. Also promotes production of melanin and capsule and thereby is required for full virulence. The chain is C2H2 finger domain transcription factor USV101 from Cryptococcus neoformans var. grubii serotype A (strain H99 / ATCC 208821 / CBS 10515 / FGSC 9487) (Filobasidiella neoformans var. grubii).